Here is a 237-residue protein sequence, read N- to C-terminus: NADPH-dependent FMN reductase ArsH (237 aa).

FMN is bound by residues S39–S46 and S102–G107.

It belongs to the ArsH family. As to quaternary structure, homotetramer. It depends on FMN as a cofactor.

Functionally, has NADPH-dependent FMN reductase activity and high NADPH-dependent ferric reductase activity with highest activity for Fe(3+) as substrate. No activity with NADH, iron trichloride, Cu(2+) or Ag(+). May be involved in cytosolic ferric iron assimilation as an NADPH-dependent ferric reductase in vivo. This is NADPH-dependent FMN reductase ArsH from Acidithiobacillus ferrooxidans (strain ATCC 23270 / DSM 14882 / CIP 104768 / NCIMB 8455) (Ferrobacillus ferrooxidans (strain ATCC 23270)).